Reading from the N-terminus, the 335-residue chain is NAC domain-containing protein 60 (335 aa).

Residues 14–156 (TFPGFKFSPT…ALVICRLRRN (143 aa)) form the NAC domain. The DNA-binding element occupies 112–162 (IGTKRTLVFHIGRAPKGGRTEWLMHEYCMIGVSLDALVICRLRRNTEFQGS). A helical membrane pass occupies residues 315-335 (ARWDVVVWLLVMIAVLVFYLV).

In terms of tissue distribution, expressed in roots, rosette leaves, cauline leaves, shoot apex, stems and flowers.

It localises to the membrane. The protein localises to the nucleus. Transcriptional activator activated by proteolytic cleavage through regulated intramembrane proteolysis (RIP). Transcription factor involved in modulation of abscisic acid (ABA) signaling. Attenuates ABA sensitivity and glucose-induced ABA accumulation. Reduces the expression of ABI4 gene. The polypeptide is NAC domain-containing protein 60 (Arabidopsis thaliana (Mouse-ear cress)).